The following is a 433-amino-acid chain: Trigger factor (433 aa).

The region spanning 161-246 is the PPIase FKBP-type domain; the sequence is NDRVIIDFVG…LNKVENMILP (86 aa).

This sequence belongs to the FKBP-type PPIase family. Tig subfamily.

The protein localises to the cytoplasm. It catalyses the reaction [protein]-peptidylproline (omega=180) = [protein]-peptidylproline (omega=0). Involved in protein export. Acts as a chaperone by maintaining the newly synthesized protein in an open conformation. Functions as a peptidyl-prolyl cis-trans isomerase. The protein is Trigger factor of Haemophilus ducreyi (strain 35000HP / ATCC 700724).